A 398-amino-acid polypeptide reads, in one-letter code: GPI mannosyltransferase 1 (398 aa).

The next 9 membrane-spanning stretches (helical) occupy residues 4–24, 79–99, 114–136, 156–176, 209–229, 271–291, 305–325, 341–361, and 375–395; these read LKYL…FGLY, WYHF…LIIL, MILS…GSAE, VILS…PIIY, IIIT…KYGW, IEKI…PLIF, FVFV…FLIF, ITGI…LYFA, and GLMY…MKFI.

It belongs to the PIGM family.

The protein localises to the endoplasmic reticulum membrane. It functions in the pathway glycolipid biosynthesis; glycosylphosphatidylinositol-anchor biosynthesis. Mannosyltransferase involved in glycosylphosphatidylinositol-anchor biosynthesis. Transfers the first alpha-1,4-mannose to GlcN-acyl-PI during GPI precursor assembly. Required for cell wall integrity. This is GPI mannosyltransferase 1 (GPI14) from Candida albicans (strain SC5314 / ATCC MYA-2876) (Yeast).